The chain runs to 60 residues: Large ribosomal subunit protein bL32 (60 aa).

Positions 1–16 (MAVPRNRHSNARKNIR) are enriched in basic residues. Positions 1 to 20 (MAVPRNRHSNARKNIRRSHD) are disordered.

It belongs to the bacterial ribosomal protein bL32 family.

The chain is Large ribosomal subunit protein bL32 (rpmF) from Chlamydia pneumoniae (Chlamydophila pneumoniae).